The sequence spans 195 residues: MTRSYRGDRRTKETDIELILNLDGKGQGKIATGIGFFDHMLEQIMKHGQLDLELKAVGDIEVDFHHTVEDVGILMGKAIAEALGDKKGIVRYATAFIPMDEALSMVSMDISGRPFLQYGVNYSGEFVGQFEVQLVEEFFRALAFNSGITLHIQTQYGRNNHHIVESIFKAFAKALREAITIDPRIEGVLSTKGSL.

This sequence belongs to the imidazoleglycerol-phosphate dehydratase family.

The protein resides in the cytoplasm. The enzyme catalyses D-erythro-1-(imidazol-4-yl)glycerol 3-phosphate = 3-(imidazol-4-yl)-2-oxopropyl phosphate + H2O. The protein operates within amino-acid biosynthesis; L-histidine biosynthesis; L-histidine from 5-phospho-alpha-D-ribose 1-diphosphate: step 6/9. The sequence is that of Imidazoleglycerol-phosphate dehydratase from Alkaliphilus metalliredigens (strain QYMF).